We begin with the raw amino-acid sequence, 130 residues long: MKVNLEWIIKQLQMIVKRAYTPFSNFKVACMIIANNQTFFGVNIENSSFPVTLCAERSAIASMVTSGHRKIDYVFVYFNTKNKSNSPCGMCRQNLLEFSHQKTKLFCIDNDSSYKQFSIDELLMNGFKKS.

Residues 3 to 130 (VNLEWIIKQL…ELLMNGFKKS (128 aa)) enclose the CMP/dCMP-type deaminase domain. 43 to 45 (NIE) is a substrate binding site. Residue C54 participates in Zn(2+) binding. The active-site Proton donor is the E56. The Zn(2+) site is built by C88 and C91.

Belongs to the cytidine and deoxycytidylate deaminase family. As to quaternary structure, homodimer. Zn(2+) is required as a cofactor.

The enzyme catalyses cytidine + H2O + H(+) = uridine + NH4(+). The catalysed reaction is 2'-deoxycytidine + H2O + H(+) = 2'-deoxyuridine + NH4(+). Functionally, this enzyme scavenges exogenous and endogenous cytidine and 2'-deoxycytidine for UMP synthesis. This is Cytidine deaminase (cdd) from Mycoplasma genitalium (strain ATCC 33530 / DSM 19775 / NCTC 10195 / G37) (Mycoplasmoides genitalium).